We begin with the raw amino-acid sequence, 247 residues long: Coiled-coil domain-containing protein 124 homolog (247 aa).

Residues 1–146 (MGGKKFGTNS…TTTTGSDDHE (146 aa)) form a disordered region. The stretch at 8–85 (TNSKAEEARS…QEDKEIKERY (78 aa)) forms a coiled coil. The span at 11-114 (KAEEARSKKA…EQKQREKELA (104 aa)) shows a compositional bias: basic and acidic residues. The span at 122-140 (VVVVPTTTTTTTTTTTTTT) shows a compositional bias: low complexity.

Belongs to the CCDC124 family. As to quaternary structure, associates with translationally inactive ribosomes in the nonrotated state.

Ribosome-binding protein involved in ribosome hibernation: associates with translationally inactive ribosomes and stabilizes the nonrotated conformation of the 80S ribosome, thereby promoting ribosome preservation and storage. The protein is Coiled-coil domain-containing protein 124 homolog of Dictyostelium discoideum (Social amoeba).